The chain runs to 632 residues: Polyadenylate-binding protein, cytoplasmic and nuclear (632 aa).

The span at 1-11 (MSAADANQLQE) shows a compositional bias: polar residues. The interval 1–43 (MSAADANQLQESLEKLNLDSAPAAAEEEAVAAESAPAGEEGAD) is disordered. Residues 31-43 (AAESAPAGEEGAD) are compositionally biased toward low complexity. 4 consecutive RRM domains span residues 52–130 (ASLY…WSQR), 140–217 (GNIF…KHIS), 233–310 (TNIY…RAQK), and 336–413 (VNLF…LAQR). The PABC domain occupies 534-615 (QQRDLAAIIA…ALTAFEEYKN (82 aa)).

The protein belongs to the polyadenylate-binding protein type-1 family.

It localises to the cytoplasm. It is found in the nucleus. Binds the poly(A) tail of mRNA. Appears to be an important mediator of the multiple roles of the poly(A) tail in mRNA biogenesis, stability and translation. In the nucleus, involved in both mRNA cleavage and polyadenylation. Is also required for efficient mRNA export to the cytoplasm. Acts in concert with a poly(A)-specific nuclease (PAN) to affect poly(A) tail shortening, which may occur concomitantly with either nucleocytoplasmic mRNA transport or translational initiation. In the cytoplasm, stimulates translation initiation and regulates mRNA decay through translation termination-coupled poly(A) shortening, probably mediated by PAN. The polypeptide is Polyadenylate-binding protein, cytoplasmic and nuclear (PAB1) (Scheffersomyces stipitis (strain ATCC 58785 / CBS 6054 / NBRC 10063 / NRRL Y-11545) (Yeast)).